The sequence spans 581 residues: NADH-quinone oxidoreductase subunit C/D (581 aa).

The interval 1–172 is NADH dehydrogenase I subunit C; the sequence is MSGAELISDL…PPFVMTAARF (172 aa). Residues 196–581 are NADH dehydrogenase I subunit D; sequence ELMILNYGPH…IDYVMSDVDR (386 aa).

This sequence in the N-terminal section; belongs to the complex I 30 kDa subunit family. The protein in the C-terminal section; belongs to the complex I 49 kDa subunit family. NDH-1 is composed of 13 different subunits. Subunits NuoB, CD, E, F, and G constitute the peripheral sector of the complex.

The protein localises to the cell inner membrane. The catalysed reaction is a quinone + NADH + 5 H(+)(in) = a quinol + NAD(+) + 4 H(+)(out). Its function is as follows. NDH-1 shuttles electrons from NADH, via FMN and iron-sulfur (Fe-S) centers, to quinones in the respiratory chain. The immediate electron acceptor for the enzyme in this species is believed to be ubiquinone. Couples the redox reaction to proton translocation (for every two electrons transferred, four hydrogen ions are translocated across the cytoplasmic membrane), and thus conserves the redox energy in a proton gradient. This chain is NADH-quinone oxidoreductase subunit C/D, found in Rhodopseudomonas palustris (strain BisA53).